Here is a 273-residue protein sequence, read N- to C-terminus: Large ribosomal subunit protein uL2c (273 aa).

Positions 223–273 are disordered; it reads MNPVDHPHGGGEGRAPIGRKKPTTPWGYPALGRRSRKRNKYSDSFILRRRK.

The protein belongs to the universal ribosomal protein uL2 family. As to quaternary structure, part of the 50S ribosomal subunit.

The protein localises to the plastid. It is found in the chloroplast. The sequence is that of Large ribosomal subunit protein uL2c (rpl2) from Calycanthus floridus var. glaucus (Eastern sweetshrub).